The following is a 384-amino-acid chain: ATP phosphoribosyltransferase regulatory subunit (384 aa).

This sequence belongs to the class-II aminoacyl-tRNA synthetase family. HisZ subfamily. As to quaternary structure, heteromultimer composed of HisG and HisZ subunits.

It is found in the cytoplasm. It participates in amino-acid biosynthesis; L-histidine biosynthesis; L-histidine from 5-phospho-alpha-D-ribose 1-diphosphate: step 1/9. Its function is as follows. Required for the first step of histidine biosynthesis. May allow the feedback regulation of ATP phosphoribosyltransferase activity by histidine. This Paracidovorax citrulli (strain AAC00-1) (Acidovorax citrulli) protein is ATP phosphoribosyltransferase regulatory subunit.